A 355-amino-acid chain; its full sequence is Peptide chain release factor 1 (355 aa).

An N5-methylglutamine modification is found at Gln233. A compositionally biased stretch (basic and acidic residues) spans 280-293 (ERRKKEQERADSRR). The disordered stretch occupies residues 280–308 (ERRKKEQERADSRRGQVGSGDRSERIRTY).

The protein belongs to the prokaryotic/mitochondrial release factor family. Post-translationally, methylated by PrmC. Methylation increases the termination efficiency of RF1.

It localises to the cytoplasm. Peptide chain release factor 1 directs the termination of translation in response to the peptide chain termination codons UAG and UAA. The chain is Peptide chain release factor 1 from Rickettsia peacockii (strain Rustic).